Reading from the N-terminus, the 523-residue chain is Probable endopeptidase p60 (523 aa).

Residues 1 to 27 form the signal peptide; the sequence is MNMKKATIAATAGIAVTAFAAPTIASA. A LysM 1 domain is found at 28 to 71; that stretch reads STVVVEAGDTLWGIAQDNGTTVDALKKANKLTTDKIVPGQKLQV. In terms of domain architecture, SH3b spans 78–142; that stretch reads KTEKSVSATW…VNGKYLGNAV (65 aa). A disordered region spans residues 146–188; the sequence is PSATPEVKQEETTQAAPAQQTKTEVKQATPAATTEKDAVETKT. Low complexity predominate over residues 157 to 167; that stretch reads TTQAAPAQQTK. Residues 198 to 241 enclose the LysM 2 domain; that stretch reads TTHTVKSGDTIWALSVKYGASVQDLMSWNNLSSSSIYVGQNIAV. Low complexity-rich tracts occupy residues 251–282 and 290–318; these read PKAE…TTTT and EKQT…TNAS. Disordered stretches follow at residues 251–323 and 367–408; these read PKAE…YTVK and ATNT…SSSA. The LysM 3 domain occupies 318 to 361; it reads SSYTVKSGDTLGKIASTFGTTVSKIKALNGLTSDNLQVGDVLKV. The region spanning 405 to 523 is the NlpC/P60 domain; it reads SSSASAIIAE…GQYLVGFGRV (119 aa). Catalysis depends on Cys435, which acts as the Nucleophile. The active-site Proton acceptor is His485. The active site involves Asn497.

The protein belongs to the peptidase C40 family.

This major extracellular protein may be involved in the invasion of non-professional phagocytic cells by Listeria. This Listeria seeligeri protein is Probable endopeptidase p60 (iap).